A 1150-amino-acid chain; its full sequence is Voltage-dependent calcium channel subunit alpha-2/delta-2 (1150 aa).

The signal sequence occupies residues 1-18 (MAVPARTCGASRPGPART). The tract at residues 1–41 (MAVPARTCGASRPGPARTARPWPGCGPHPGPGTRRPTSGPP) is disordered. Over 19–1113 (ARPWPGCGPH…TEDTSDCGRG (1095 aa)) the chain is Extracellular. In terms of domain architecture, VWFA spans 291–469 (DMVIIVDVSG…INTQEYLDVL (179 aa)). Positions 297, 299, and 301 each coordinate a divalent metal cation. An MIDAS-like motif motif is present at residues 297 to 301 (DVSGS). 6 N-linked (GlcNAc...) asparagine glycosylation sites follow: Asn386, Asn418, Asn507, Asn540, Asn624, and Asn861. Cys443 and Cys1098 are disulfide-bonded. Residues 485-574 (WTNVYEDALG…KPQTTNFREP (90 aa)) enclose the Cache domain. The chain crosses the membrane as a helical span at residues 1114-1134 (ASFPPSLGVLVSLQLLLLLGL). At 1135–1150 (PPRPQPQVLVHASRRL) the chain is on the cytoplasmic side.

Belongs to the calcium channel subunit alpha-2/delta family. Dimer formed of alpha-2-2 and delta-2 chains; disulfide-linked. Voltage-dependent calcium channels are multisubunit complexes, consisting of alpha-1 (CACNA1), alpha-2 (CACNA2D), beta (CACNB) and delta (CACNA2D) subunits in a 1:1:1:1 ratio. Post-translationally, may be proteolytically processed into subunits alpha-2-2 and delta-2 that are disulfide-linked. It is however unclear whether such cleavage really takes place in vivo and has a functional role. As to expression, predominantly present in cerebellar cortex. Present in various lung tumor cell lines, while it is absent in normal lung (at protein level). Highly expressed in heart, lung, testis, pancreas and skeletal muscle. Also expressed in kidney, liver, placenta and brain.

It is found in the membrane. The alpha-2/delta subunit of voltage-dependent calcium channels regulates calcium current density and activation/inactivation kinetics of the calcium channel. Acts as a regulatory subunit for P/Q-type calcium channel (CACNA1A), N-type (CACNA1B), L-type (CACNA1C OR CACNA1D) and possibly T-type (CACNA1G). Overexpression induces apoptosis. The protein is Voltage-dependent calcium channel subunit alpha-2/delta-2 (CACNA2D2) of Homo sapiens (Human).